Consider the following 84-residue polypeptide: Mu-conotoxin-like Cal 12.2d (84 aa).

The signal sequence occupies residues 1-19 (MKLTCVLVVLLLVLPFGDL). Residues 20-42 (ITTSNTEDNKRGATPWQNSLKAR) constitute a propeptide that is removed on maturation. Trp72 carries the post-translational modification 6'-bromotryptophan. Pro77 carries the post-translational modification 4-hydroxyproline. Trp81 carries the post-translational modification 6'-bromotryptophan.

This sequence belongs to the conotoxin O1 superfamily. In terms of processing, contains 4 disulfide bonds. In terms of tissue distribution, expressed by the venom duct.

It localises to the secreted. Its function is as follows. Mu-conotoxins block voltage-gated sodium channels. This toxin reversibly blocks voltage-gated sodium channel in cephalopods, with no alteration in the voltage dependence of sodium conductance or on the kinetics of inactivation. In Californiconus californicus (California cone), this protein is Mu-conotoxin-like Cal 12.2d.